Consider the following 141-residue polypeptide: Transcriptional regulator MraZ (141 aa).

2 SpoVT-AbrB domains span residues 5–47 (TFNI…KPQD) and 76–119 (ANFV…DKKL).

It belongs to the MraZ family. As to quaternary structure, homooctamer. Forms a ring.

It localises to the cytoplasm. It is found in the nucleoid. This Mycoplasma pneumoniae (strain ATCC 29342 / M129 / Subtype 1) (Mycoplasmoides pneumoniae) protein is Transcriptional regulator MraZ.